Here is a 245-residue protein sequence, read N- to C-terminus: AP-1-like transcription factor YAP5 (245 aa).

Over residues 34 to 47 (LPHRAAQRRKRVHR) the composition is skewed to basic residues. Positions 34 to 77 (LPHRAAQRRKRVHRLHEDYETEENDEELQKKKRQNRDAQRAYRE) are disordered. A bZIP domain is found at 58–121 (DEELQKKKRQ…QAKESENHAL (64 aa)). The interval 63 to 82 (KKKRQNRDAQRAYRERKNNK) is basic motif. A compositionally biased stretch (basic and acidic residues) spans 68–77 (NRDAQRAYRE). The segment at 86 to 114 (LEETIESLSKVVKNYETKLNRLQNELQAK) is leucine-zipper.

The protein belongs to the bZIP family. YAP subfamily. Homodimer.

The protein resides in the cytoplasm. It is found in the nucleus. Functionally, transcription activator involved in the regulation of genes expressed in response to environmental changes and metabolic requirements. According to genome-wide promoter binding and gene expression studies it is a coregulator for the expression of ribosomal genes, while its own expression is induced by the cell cycle specific activator SBF (SWI4-SWI6). In Saccharomyces cerevisiae (strain ATCC 204508 / S288c) (Baker's yeast), this protein is AP-1-like transcription factor YAP5 (YAP5).